Here is a 69-residue protein sequence, read N- to C-terminus: Cell division protein ZapB (69 aa).

Residues 6 to 68 are a coiled coil; that stretch reads LEQLEARVQS…LGKMDQMNSE (63 aa).

Belongs to the ZapB family. As to quaternary structure, homodimer. The ends of the coiled-coil dimer bind to each other, forming polymers. Interacts with FtsZ.

The protein localises to the cytoplasm. In terms of biological role, non-essential, abundant cell division factor that is required for proper Z-ring formation. It is recruited early to the divisome by direct interaction with FtsZ, stimulating Z-ring assembly and thereby promoting cell division earlier in the cell cycle. Its recruitment to the Z-ring requires functional FtsA or ZipA. This Tolumonas auensis (strain DSM 9187 / NBRC 110442 / TA 4) protein is Cell division protein ZapB.